The following is a 187-amino-acid chain: NADH-dependent FMN reductase SfnF (187 aa).

Belongs to the SsuE family.

The enzyme catalyses FMNH2 + NAD(+) = FMN + NADH + 2 H(+). Functionally, involved in the dimethyl sulfide degradation pathway. Catalyzes the NADH-dependent reduction of FMN. This chain is NADH-dependent FMN reductase SfnF, found in Pseudomonas fluorescens (strain Pf0-1).